The primary structure comprises 436 residues: Ribulose bisphosphate carboxylase large chain (436 aa).

N104 and T154 together coordinate substrate. The active-site Proton acceptor is K156. Substrate is bound at residue K158. 3 residues coordinate Mg(2+): K182, D184, and E185. Residue K182 is modified to N6-carboxylysine. H275 acts as the Proton acceptor in catalysis. R276, H308, and S360 together coordinate substrate.

This sequence belongs to the RuBisCO large chain family. Type I subfamily. As to quaternary structure, heterohexadecamer of 8 large chains and 8 small chains. The cofactor is Mg(2+).

It localises to the plastid. The protein localises to the chloroplast. The catalysed reaction is 2 (2R)-3-phosphoglycerate + 2 H(+) = D-ribulose 1,5-bisphosphate + CO2 + H2O. It carries out the reaction D-ribulose 1,5-bisphosphate + O2 = 2-phosphoglycolate + (2R)-3-phosphoglycerate + 2 H(+). Its function is as follows. RuBisCO catalyzes two reactions: the carboxylation of D-ribulose 1,5-bisphosphate, the primary event in carbon dioxide fixation, as well as the oxidative fragmentation of the pentose substrate in the photorespiration process. Both reactions occur simultaneously and in competition at the same active site. The chain is Ribulose bisphosphate carboxylase large chain from Euglena stellata.